The chain runs to 336 residues: MKDRYILAFETSCDETSVAVLKNDDELLSNVIASQIESHKRFGGVVPEVASRHHVEVITACIEEALAEAGITEEDVTAVAVTYGPGLVGALLVGLSAAKAFAWAHGLPLIPVNHMAGHLMAAQSVEPLEFPLLALLVSGGHTELVYVSEAGDYKIVGETRDDAVGEAYDKVGRVMGLTYPAGREIDELVHQGQDIYDFPRAMIKEDNLEFSFSGLKSAFINLHHNAEQKGESLSTEDLCASFQAAVMDILMAKTKKALEKYPVKTLVVAGGVAANKGLRERLAAEITDVKVIIPPLRLCGDNAGMIAYASVSEWNKENFAGWDLNAKPSLAFDTME.

Fe cation contacts are provided by His114 and His118. Residues Leu136–Gly140, Asp169, Gly182, Asp186, and Asn275 contribute to the substrate site. Asp301 is a Fe cation binding site.

Belongs to the KAE1 / TsaD family. Fe(2+) serves as cofactor.

The protein resides in the cytoplasm. It carries out the reaction L-threonylcarbamoyladenylate + adenosine(37) in tRNA = N(6)-L-threonylcarbamoyladenosine(37) in tRNA + AMP + H(+). Required for the formation of a threonylcarbamoyl group on adenosine at position 37 (t(6)A37) in tRNAs that read codons beginning with adenine. Is involved in the transfer of the threonylcarbamoyl moiety of threonylcarbamoyl-AMP (TC-AMP) to the N6 group of A37, together with TsaE and TsaB. TsaD likely plays a direct catalytic role in this reaction. The sequence is that of tRNA N6-adenosine threonylcarbamoyltransferase from Streptococcus pneumoniae serotype 19F (strain G54).